The sequence spans 684 residues: MSAIPAEESDQLLIRPLGAGQEVGRSCIILEFKGRKIMLDCGIHPGLEGMDALPYIDLIDPAEIDLLLISHFHLDHCGALPWFLQKTSFKGRTFMTHATKAIYRWLLSDYVKVSNISADDMLYTETDLEESMDKIETINFHEVKEVAGIKFWCYHAGHVLGAAMFMIEIAGVKLLYTGDFSRQEDRHLMAAEIPNIKPDILIIESTYGTHIHEKREEREARFCNTVHDIVNRGGRGLIPVFALGRAQELLLILDEYWQNHPELHDIPIYYASSLAKKCMAVYQTYVNAMNDKIRKQININNPFVFKHISNLKSMDHFDDIGPSVVMASPGMMQSGLSRELFESWCTDKRNGVIIAGYCVEGTLAKHIMSEPEEITTMSGQKLPLKMSVDYISFSAHTDYQQTSEFIRALKPPHVILVHGEQNEMARLKAALIREYEDNDEVHIEVHNPRNTEAVTLNFRGEKLAKVMGFLADKKPEQGQRVSGILVKRNFNYHILSPCDLSNYTDLAMSTVKQTQAIPYTGPFNLLYYQLQKLTGDVEELEIQEKPALKVFKNITVIQEPGMVVLEWLANPSNDMYADTVTTVILEVQSNPKIRKGAVQKVSKKLEMHVYSKRLEIMLQDIFGEDCVSVKDGSILSVTVDGKTANINLETRTVECEEGSEDDESLREMVELAAQRLYEALTPVH.

N-acetylserine is present on Ser-2. Zn(2+) contacts are provided by His-71, His-73, Asp-75, His-76, His-158, and Asp-179. Residue His-396 is the Proton donor of the active site. Residue His-418 coordinates Zn(2+). Glycyl lysine isopeptide (Lys-Gly) (interchain with G-Cter in SUMO) cross-links involve residues Lys-462, Lys-465, and Lys-545. The residue at position 659 (Ser-659) is a Phosphoserine. Thr-681 bears the Phosphothreonine mark.

This sequence belongs to the metallo-beta-lactamase superfamily. RNA-metabolizing metallo-beta-lactamase-like family. CPSF3 subfamily. In terms of assembly, component of the cleavage and polyadenylation specificity factor (CPSF) complex, composed of CPSF1, CPSF2, CPSF3, CPSF4 and FIP1L1. Interacts with CPSF2, CSTF2 and SYMPK. Interacts with TUT1; the interaction is direct and mediates the recruitment of the CPSF complex on the 3'UTR of pre-mRNAs. Interacts with WDR33. Interacts with ZC3H3. Zn(2+) serves as cofactor. Sumoylated on Lys-462, Lys-465 and Lys-545, preferentially by SUMO3.

The protein resides in the nucleus. In terms of biological role, component of the cleavage and polyadenylation specificity factor (CPSF) complex that plays a key role in pre-mRNA 3'-end formation, recognizing the AAUAAA signal sequence and interacting with poly(A) polymerase and other factors to bring about cleavage and poly(A) addition. Has endonuclease activity, and functions as an mRNA 3'-end-processing endonuclease. Also involved in the histone 3'-end pre-mRNA processing. U7 snRNP-dependent protein that induces both the 3'-endoribonucleolytic cleavage of histone pre-mRNAs and acts as a 5' to 3' exonuclease for degrading the subsequent downstream cleavage product (DCP) of mature histone mRNAs. Cleavage occurs after the 5'-ACCCA-3' sequence in the histone pre-mRNA leaving a 3'hydroxyl group on the upstream fragment containing the stem loop (SL) and 5' phosphate on the downstream cleavage product (DCP) starting with CU nucleotides. The U7-dependent 5' to 3' exonuclease activity is processive and degrades the DCP RNA substrate even after complete removal of the U7-binding site. Binds to the downstream cleavage product (DCP) of histone pre-mRNAs and the cleaved DCP RNA substrate in a U7 snRNP dependent manner. Required for entering/progressing through S-phase of the cell cycle. Required for the selective processing of microRNAs (miRNAs) during embryonic stem cell differentiation via its interaction with ISY1. Required for the biogenesis of all miRNAs from the pri-miR-17-92 primary transcript except miR-92a. Only required for the biogenesis of miR-290 and miR-96 from the pri-miR-290-295 and pri-miR-96-183 primary transcripts, respectively. This Bos taurus (Bovine) protein is Cleavage and polyadenylation specificity factor subunit 3 (CPSF3).